The sequence spans 300 residues: Soluble inorganic pyrophosphatase 6, chloroplastic (300 aa).

The transit peptide at 1-66 directs the protein to the chloroplast; the sequence is MAATRVLTAA…CSAIYNPQVK (66 aa). Arginine 140 lines the diphosphate pocket. Tyrosine 142 acts as the Proton donor in catalysis. Mg(2+)-binding residues include aspartate 173, aspartate 178, and aspartate 210.

The protein belongs to the PPase family. It depends on Mg(2+) as a cofactor. In terms of tissue distribution, expressed in all tissues tested. Highest expression in flowers, leaves and roots. Lower levels of expression in siliques, stems, ovary, stigma and pollen.

It is found in the plastid. The protein localises to the chloroplast stroma. The catalysed reaction is diphosphate + H2O = 2 phosphate + H(+). With respect to regulation, inhibited by NaF. This Arabidopsis thaliana (Mouse-ear cress) protein is Soluble inorganic pyrophosphatase 6, chloroplastic.